The chain runs to 274 residues: Cytochrome b-c1 complex subunit Rieske, mitochondrial (274 aa).

Residues 79-103 (SHTDVKVPDFSEYRRLEVLDSTKSS) lie on the Mitochondrial matrix side of the membrane. Residues 104-140 (RESSEARKGFSYLVTGVTTVGVAYAAKNAVTQFVSSM) form a helical membrane-spanning segment. Topologically, residues 141–274 (SASADVLALA…FTSDDMVIVG (134 aa)) are mitochondrial intermembrane. The Rieske domain occupies 187–272 (EAAVELSQLR…YEFTSDDMVI (86 aa)). 5 residues coordinate [2Fe-2S] cluster: Cys217, His219, Cys236, His239, and Ser241. A disulfide bond links Cys222 and Cys238.

The protein belongs to the Rieske iron-sulfur protein family. Component of the ubiquinol-cytochrome c oxidoreductase (cytochrome b-c1 complex, complex III, CIII), a multisubunit enzyme composed of 11 subunits. The complex is composed of 3 respiratory subunits cytochrome b, cytochrome c1 and Rieske protein UQCRFS1, 2 core protein subunits UQCRC1/QCR1 and UQCRC2/QCR2, and 6 low-molecular weight protein subunits UQCRH/QCR6, UQCRB/QCR7, UQCRQ/QCR8, UQCR10/QCR9, UQCR11/QCR10 and subunit 9, the cleavage product of Rieske protein UQCRFS1. The complex exists as an obligatory dimer and forms supercomplexes (SCs) in the inner mitochondrial membrane with NADH-ubiquinone oxidoreductase (complex I, CI) and cytochrome c oxidase (complex IV, CIV), resulting in different assemblies (supercomplex SCI(1)III(2)IV(1) and megacomplex MCI(2)III(2)IV(2)). Incorporation of the Rieske protein UQCRFS1 is the penultimate step in complex III assembly. Interacts with TTC19, which is involved in the clearance of UQCRFS1 fragments. In terms of assembly, component of the ubiquinol-cytochrome c oxidoreductase (cytochrome b-c1 complex, complex III, CIII). Subunit 9 corresponds to the mitochondrial targeting sequence (MTS) of Rieske protein UQCRFS1. It is retained after processing and incorporated inside complex III, where it remains bound to the complex and localizes between the 2 core subunits UQCRC1/QCR1 and UQCRC2/QCR2. Requires [2Fe-2S] cluster as cofactor. In terms of processing, proteolytic processing is necessary for the correct insertion of UQCRFS1 in the complex III dimer. Several fragments are generated during UQCRFS1 insertion, most probably due to the endogenous matrix-processing peptidase (MPP) activity of the 2 core protein subunits UQCRC1/QCR1 and UQCRC2/QCR2, which are homologous to the 2 mitochondrial-processing peptidase (MPP) subunits beta-MPP and alpha-MPP respectively. The action of the protease is also necessary for the clearance of the UQCRFS1 fragments.

The protein resides in the mitochondrion inner membrane. The enzyme catalyses a quinol + 2 Fe(III)-[cytochrome c](out) = a quinone + 2 Fe(II)-[cytochrome c](out) + 2 H(+)(out). Its function is as follows. Component of the ubiquinol-cytochrome c oxidoreductase, a multisubunit transmembrane complex that is part of the mitochondrial electron transport chain which drives oxidative phosphorylation. The respiratory chain contains 3 multisubunit complexes succinate dehydrogenase (complex II, CII), ubiquinol-cytochrome c oxidoreductase (cytochrome b-c1 complex, complex III, CIII) and cytochrome c oxidase (complex IV, CIV), that cooperate to transfer electrons derived from NADH and succinate to molecular oxygen, creating an electrochemical gradient over the inner membrane that drives transmembrane transport and the ATP synthase. The cytochrome b-c1 complex catalyzes electron transfer from ubiquinol to cytochrome c, linking this redox reaction to translocation of protons across the mitochondrial inner membrane, with protons being carried across the membrane as hydrogens on the quinol. In the process called Q cycle, 2 protons are consumed from the matrix, 4 protons are released into the intermembrane space and 2 electrons are passed to cytochrome c. The Rieske protein is a catalytic core subunit containing a [2Fe-2S] iron-sulfur cluster. It cycles between 2 conformational states during catalysis to transfer electrons from the quinol bound in the Q(0) site in cytochrome b to cytochrome c1. Incorporation of UQCRFS1 is the penultimate step in complex III assembly. In terms of biological role, component of the ubiquinol-cytochrome c oxidoreductase (cytochrome b-c1 complex, complex III, CIII). UQCRFS1 undergoes proteolytic processing once it is incorporated in the complex III dimer. One of the fragments, called subunit 9, corresponds to its mitochondrial targeting sequence (MTS). The proteolytic processing is necessary for the correct insertion of UQCRFS1 in the complex III dimer, but the persistence of UQCRFS1-derived fragments may prevent newly imported UQCRFS1 to be processed and assembled into complex III and is detrimental for the complex III structure and function. This is Cytochrome b-c1 complex subunit Rieske, mitochondrial (UQCRFS1) from Pan paniscus (Pygmy chimpanzee).